The chain runs to 414 residues: Ferredoxin--NAD(P)(+) reductase fdr (414 aa).

Residue 7-38 (DVVIVGAGHGGAQTAIALRQNGFAGTIAIIGA) participates in FAD binding. 149–177 (KVVIIGGGYIGLEAAAVMAKFGKNVTLIE) serves as a coordination point for NAD(+).

It belongs to the FAD-dependent oxidoreductase family. Monomer. Carbazole 1,9a-dioxygenase complex consists of a terminal oxygenase component CarAa, a ferredoxin reductase component fdr and a ferredoxin component CarAc. FAD serves as cofactor.

The enzyme catalyses 2 reduced [2Fe-2S]-[ferredoxin] + NAD(+) + H(+) = 2 oxidized [2Fe-2S]-[ferredoxin] + NADH. The catalysed reaction is 2 reduced [2Fe-2S]-[ferredoxin] + NADP(+) + H(+) = 2 oxidized [2Fe-2S]-[ferredoxin] + NADPH. Functionally, part of the multicomponent carbazole 1,9a-dioxygenase (CARDO), that converts carbazole (CAR) into 2-aminobiphenyl-2,3-diol. This is Ferredoxin--NAD(P)(+) reductase fdr (fdr) from Sphingomonas sp.